We begin with the raw amino-acid sequence, 29 residues long: Brevinin-2Ed (29 aa).

A disulfide bridge connects residues cysteine 23 and cysteine 29.

It belongs to the frog skin active peptide (FSAP) family. Brevinin subfamily. Expressed by the skin glands.

The protein localises to the secreted. In terms of biological role, shows antibacterial activity against representative Gram-negative and Gram-positive bacterial species, and hemolytic activity. The sequence is that of Brevinin-2Ed from Pelophylax lessonae (Pool frog).